Here is a 490-residue protein sequence, read N- to C-terminus: Zinc finger protein STP4 (490 aa).

2 stretches are compositionally biased toward low complexity: residues 1–16 (MLVSSSFASSIDSVMS) and 52–73 (PSLPLLSSTTSSSRSTLSSTLN). Residues 1 to 85 (MLVSSSFASS…PPPPLTTSYS (85 aa)) form a disordered region. Residues Ser-153 and Ser-155 each carry the phosphoserine modification. Low complexity predominate over residues 231-247 (QQQQQLNSSSSASALPS). A disordered region spans residues 231–273 (QQQQQLNSSSSASALPSIHSPLTNEHTSRYSSSLKDSAKITKQ). The span at 250–265 (SPLTNEHTSRYSSSLK) shows a compositional bias: polar residues. The C2H2-type zinc finger occupies 304 to 326 (HKCPICQRGFARNNDLIRHKKRH). The tract at residues 338-375 (ESDNNSGADDQDDTARTSANNDSDDSNDKLAASSSSEE) is disordered.

The protein localises to the cytoplasm. It is found in the mitochondrion. It localises to the nucleus. The polypeptide is Zinc finger protein STP4 (STP4) (Saccharomyces cerevisiae (strain ATCC 204508 / S288c) (Baker's yeast)).